A 240-amino-acid chain; its full sequence is UDP-2,3-diacylglucosamine hydrolase (240 aa).

Mn(2+) contacts are provided by aspartate 8, histidine 10, aspartate 41, asparagine 79, and histidine 114. 79-80 (NR) serves as a coordination point for substrate. Positions 122, 160, 164, 167, and 195 each coordinate substrate. Mn(2+)-binding residues include histidine 195 and histidine 197.

Belongs to the LpxH family. Mn(2+) serves as cofactor.

The protein localises to the cell inner membrane. The catalysed reaction is UDP-2-N,3-O-bis[(3R)-3-hydroxytetradecanoyl]-alpha-D-glucosamine + H2O = 2-N,3-O-bis[(3R)-3-hydroxytetradecanoyl]-alpha-D-glucosaminyl 1-phosphate + UMP + 2 H(+). Its pathway is glycolipid biosynthesis; lipid IV(A) biosynthesis; lipid IV(A) from (3R)-3-hydroxytetradecanoyl-[acyl-carrier-protein] and UDP-N-acetyl-alpha-D-glucosamine: step 4/6. Functionally, hydrolyzes the pyrophosphate bond of UDP-2,3-diacylglucosamine to yield 2,3-diacylglucosamine 1-phosphate (lipid X) and UMP by catalyzing the attack of water at the alpha-P atom. Involved in the biosynthesis of lipid A, a phosphorylated glycolipid that anchors the lipopolysaccharide to the outer membrane of the cell. This is UDP-2,3-diacylglucosamine hydrolase from Salmonella arizonae (strain ATCC BAA-731 / CDC346-86 / RSK2980).